We begin with the raw amino-acid sequence, 676 residues long: Beta-taxilin (676 aa).

2 disordered regions span residues 1–55 and 71–131; these read MEND…DISE and AASL…EQKL. 2 stretches are compositionally biased toward polar residues: residues 8–25 and 34–45; these read EKQQQVTTSPTQDNQGQS and QPLSPTNQTSAQ. A compositionally biased stretch (basic and acidic residues) spans 75–92; sequence VEKEGTTAETDKPEKEDV. The span at 93-105 shows a compositional bias: acidic residues; sequence GSMEDAECEDVNE. A compositionally biased stretch (basic and acidic residues) spans 106-131; the sequence is ESEKDKPAPGDASRAKEPSASKEQKL. A coiled-coil region spans residues 157–461; that stretch reads EEKLDLLFKK…LYRKIKQAQL (305 aa). The interval 464-486 is disordered; sequence EVNGNDILEEDDDANTNPSSSEQ.

This sequence belongs to the taxilin family. Specifically expressed in skeletal and cardiac muscle.

The protein resides in the cytoplasm. Promotes neurite-outgrowth. May be involved in intracellular vesicle traffic. This is Beta-taxilin (TXLNB) from Gallus gallus (Chicken).